Consider the following 229-residue polypeptide: Large ribosomal subunit protein uL1 (229 aa).

It belongs to the universal ribosomal protein uL1 family. Part of the 50S ribosomal subunit.

In terms of biological role, binds directly to 23S rRNA. The L1 stalk is quite mobile in the ribosome, and is involved in E site tRNA release. Its function is as follows. Protein L1 is also a translational repressor protein, it controls the translation of the L11 operon by binding to its mRNA. The protein is Large ribosomal subunit protein uL1 of Flavobacterium johnsoniae (strain ATCC 17061 / DSM 2064 / JCM 8514 / BCRC 14874 / CCUG 350202 / NBRC 14942 / NCIMB 11054 / UW101) (Cytophaga johnsonae).